The sequence spans 736 residues: Elongation factor 2 (736 aa).

The 217-residue stretch at 18–234 (TRVRNIGIIA…VIDAYTASDK (217 aa)) folds into the tr-type G domain. GTP-binding positions include 27–34 (AHVDHGKT), 93–97 (DTPGH), and 147–150 (NKVD). The residue at position 603 (histidine 603) is a Diphthamide.

Belongs to the TRAFAC class translation factor GTPase superfamily. Classic translation factor GTPase family. EF-G/EF-2 subfamily.

The protein localises to the cytoplasm. Its function is as follows. Catalyzes the GTP-dependent ribosomal translocation step during translation elongation. During this step, the ribosome changes from the pre-translocational (PRE) to the post-translocational (POST) state as the newly formed A-site-bound peptidyl-tRNA and P-site-bound deacylated tRNA move to the P and E sites, respectively. Catalyzes the coordinated movement of the two tRNA molecules, the mRNA and conformational changes in the ribosome. The sequence is that of Elongation factor 2 from Saccharolobus islandicus (strain Y.N.15.51 / Yellowstone #2) (Sulfolobus islandicus).